The sequence spans 636 residues: Interleukin-27 receptor subunit alpha (636 aa).

The first 32 residues, 1-32 (MRGGRGAPFWLWPLPKLALLPLLWVLFQRTRP), serve as a signal peptide directing secretion. Over 33-516 (QGSAGPLQCY…HLPDNTLRWK (484 aa)) the chain is Extracellular. Residues Asn51 and Asn76 are each glycosylated (N-linked (GlcNAc...) asparagine). Positions 131-231 (PRLGPDVDFS…PILSFQTPPS (101 aa)) constitute a Fibronectin type-III 1 domain. The short motif at 217–221 (WGEWS) is the WSXWS motif element. Asn302, Asn311, Asn374, Asn382, and Asn467 each carry an N-linked (GlcNAc...) asparagine glycan. Fibronectin type-III domains are found at residues 322–417 (APRS…LAPL) and 419–511 (GPTL…LPDN). Residues 517–537 (VLPGILFLWGLFLLGCGLSLA) form a helical membrane-spanning segment. The Cytoplasmic portion of the chain corresponds to 538 to 636 (TSGRCYHLRH…LGPPRPQVLA (99 aa)). The Box 1 motif motif lies at 554 to 562 (VWEKVPDPA). Residues 587–636 (EVEEMEPPPVMESSQPAQATAPLDSGYEKHFLPTPEELGLLGPPRPQVLA) form a disordered region. The segment covering 618–628 (LPTPEELGLLG) has biased composition (low complexity).

Belongs to the type I cytokine receptor family. Type 2 subfamily. As to quaternary structure, component of a receptor complex composed of IL6ST/GP130, IL27RA/WSX1 and CNTFR which interacts with the neuroprotective peptide humanin. In terms of tissue distribution, highly expressed in lymphoid tissues such as spleen, lymph nodes and peripheral blood leukocytes. Weakly expressed in other tissues examined including heart, brain, fetal and adult lung, liver, skeletal muscle, kidney, pancreas, prostate, testis, ovary, small intestine, kidney and colon. In the lymphoid system, higher level expression in CD4+ T-cell subsets than in CD8+ T-cell subsets. Also weaker expression in CD19+ B-cells and monocytes.

The protein resides in the membrane. Its function is as follows. Receptor for IL27. Requires IL6ST/GP130 to mediate signal transduction in response to IL27. This signaling system acts through STAT3 and STAT1. Acts as a receptor for the neuroprotective peptide humanin as part of a complex with IL6ST/GP130 and CNTFR. Involved in the regulation of Th1-type immune responses. Also appears to be involved in innate defense mechanisms. The protein is Interleukin-27 receptor subunit alpha (IL27RA) of Homo sapiens (Human).